The following is a 124-amino-acid chain: Large ribosomal subunit protein uL14 (124 aa).

This sequence belongs to the universal ribosomal protein uL14 family. In terms of assembly, part of the 50S ribosomal subunit. Forms a cluster with proteins L3 and L19. In the 70S ribosome, L14 and L19 interact and together make contacts with the 16S rRNA in bridges B5 and B8.

Functionally, binds to 23S rRNA. Forms part of two intersubunit bridges in the 70S ribosome. This chain is Large ribosomal subunit protein uL14, found in Mycoplasmoides gallisepticum (strain R(low / passage 15 / clone 2)) (Mycoplasma gallisepticum).